The primary structure comprises 214 residues: Pyrophosphatase PpaX (214 aa).

D9 functions as the Nucleophile in the catalytic mechanism.

This sequence belongs to the HAD-like hydrolase superfamily. PpaX family. The cofactor is Mg(2+).

It catalyses the reaction diphosphate + H2O = 2 phosphate + H(+). In terms of biological role, hydrolyzes pyrophosphate formed during P-Ser-HPr dephosphorylation by HPrK/P. Might play a role in controlling the intracellular pyrophosphate pool. The protein is Pyrophosphatase PpaX of Oceanobacillus iheyensis (strain DSM 14371 / CIP 107618 / JCM 11309 / KCTC 3954 / HTE831).